A 334-amino-acid chain; its full sequence is Ornithine carbamoyltransferase (334 aa).

Carbamoyl phosphate-binding positions include serine 56 to threonine 59, glutamine 83, arginine 107, and histidine 134 to glutamine 137. L-ornithine-binding positions include asparagine 168, aspartate 232, and serine 236 to methionine 237. Residues cysteine 274–leucine 275 and arginine 320 each bind carbamoyl phosphate.

The protein belongs to the aspartate/ornithine carbamoyltransferase superfamily. OTCase family. Homotrimer.

Its subcellular location is the cytoplasm. The catalysed reaction is carbamoyl phosphate + L-ornithine = L-citrulline + phosphate + H(+). The protein operates within amino-acid biosynthesis; L-arginine biosynthesis; L-arginine from L-ornithine and carbamoyl phosphate: step 1/3. In terms of biological role, reversibly catalyzes the transfer of the carbamoyl group from carbamoyl phosphate (CP) to the N(epsilon) atom of ornithine (ORN) to produce L-citrulline. The polypeptide is Ornithine carbamoyltransferase (argI) (Salmonella typhimurium (strain LT2 / SGSC1412 / ATCC 700720)).